The chain runs to 404 residues: Tyrosine--tRNA ligase (404 aa).

The 'HIGH' region signature appears at 45–54; the sequence is PTAPDLHLGH. Residues 229-233 carry the 'KMSKS' region motif; it reads KMSKS. An ATP-binding site is contributed by K232. One can recognise an S4 RNA-binding domain in the interval 342-402; that stretch reads IFIASIVRLA…GKKAIAQVTF (61 aa).

Belongs to the class-I aminoacyl-tRNA synthetase family. TyrS type 2 subfamily. Homodimer.

The protein localises to the cytoplasm. The catalysed reaction is tRNA(Tyr) + L-tyrosine + ATP = L-tyrosyl-tRNA(Tyr) + AMP + diphosphate + H(+). Its function is as follows. Catalyzes the attachment of tyrosine to tRNA(Tyr) in a two-step reaction: tyrosine is first activated by ATP to form Tyr-AMP and then transferred to the acceptor end of tRNA(Tyr). In Acinetobacter baylyi (strain ATCC 33305 / BD413 / ADP1), this protein is Tyrosine--tRNA ligase.